Reading from the N-terminus, the 402-residue chain is Diaminopimelate decarboxylase (402 aa).

Lysine 45 is modified (N6-(pyridoxal phosphate)lysine). Residues glycine 224 and 259–262 contribute to the pyridoxal 5'-phosphate site; that span reads EPGR. The substrate site is built by arginine 262, arginine 298, and tyrosine 302. Cysteine 327 serves as the catalytic Proton donor. The substrate site is built by glutamate 328 and tyrosine 356. A pyridoxal 5'-phosphate-binding site is contributed by tyrosine 356.

This sequence belongs to the Orn/Lys/Arg decarboxylase class-II family. LysA subfamily. As to quaternary structure, homodimer. Pyridoxal 5'-phosphate serves as cofactor.

It carries out the reaction meso-2,6-diaminopimelate + H(+) = L-lysine + CO2. Its pathway is amino-acid biosynthesis; L-lysine biosynthesis via DAP pathway; L-lysine from DL-2,6-diaminopimelate: step 1/1. Functionally, specifically catalyzes the decarboxylation of meso-diaminopimelate (meso-DAP) to L-lysine. The chain is Diaminopimelate decarboxylase from Campylobacter jejuni subsp. jejuni serotype O:2 (strain ATCC 700819 / NCTC 11168).